The following is a 273-amino-acid chain: MALKNFNPITPSLRELVQVDKTSLWKGRPLKSLTKGISKTGGRNNQGRITSWHRGGGHKKLYRIIDFKRNKIDISAIVERIEYDPNRTAFIALIKYEDGEYSYILAPQKLSVGDRVISSQDADIKIGNCLPLKFIPTGTTLHNVEMKVGKGGQIARSAGTSVDLVGKDSGYAQIKLRSGEFRLVPLDCKATIGSISNPDQKNINLGKAGRNRWLGWRPHVRGVAMNPVDHPHGGGEGKTSGGRHPVTPWGFPTKGKKTRKNKRTSKFIVKKRK.

Residues 228–273 (VDHPHGGGEGKTSGGRHPVTPWGFPTKGKKTRKNKRTSKFIVKKRK) are disordered. A compositionally biased stretch (basic residues) spans 254–273 (KGKKTRKNKRTSKFIVKKRK).

It belongs to the universal ribosomal protein uL2 family. In terms of assembly, part of the 50S ribosomal subunit. Forms a bridge to the 30S subunit in the 70S ribosome.

One of the primary rRNA binding proteins. Required for association of the 30S and 50S subunits to form the 70S ribosome, for tRNA binding and peptide bond formation. It has been suggested to have peptidyltransferase activity; this is somewhat controversial. Makes several contacts with the 16S rRNA in the 70S ribosome. This Rickettsia felis (strain ATCC VR-1525 / URRWXCal2) (Rickettsia azadi) protein is Large ribosomal subunit protein uL2.